Here is a 270-residue protein sequence, read N- to C-terminus: UPF0246 protein Psyc_0554 (270 aa).

The protein belongs to the UPF0246 family.

This Psychrobacter arcticus (strain DSM 17307 / VKM B-2377 / 273-4) protein is UPF0246 protein Psyc_0554.